The chain runs to 290 residues: Undecaprenyl-diphosphatase 2 (290 aa).

6 helical membrane passes run 104-124 (WMVI…KDLI), 128-148 (LRNL…FILA), 174-194 (CLAL…GLFL), 205-225 (SFLL…PDAF), 237-257 (QLFV…AWLL), and 268-288 (FALW…FGVL).

This sequence belongs to the UppP family.

It is found in the cell membrane. It carries out the reaction di-trans,octa-cis-undecaprenyl diphosphate + H2O = di-trans,octa-cis-undecaprenyl phosphate + phosphate + H(+). Functionally, catalyzes the dephosphorylation of undecaprenyl diphosphate (UPP). Confers resistance to bacitracin. This chain is Undecaprenyl-diphosphatase 2, found in Corynebacterium jeikeium (strain K411).